Here is a 440-residue protein sequence, read N- to C-terminus: Ribosomal protein uS12 methylthiotransferase RimO (440 aa).

The MTTase N-terminal domain maps to 1-117; it reads MKIFFISLGC…ITEVIDKVLG (117 aa). 6 residues coordinate [4Fe-4S] cluster: cysteine 10, cysteine 46, cysteine 80, cysteine 154, cysteine 158, and cysteine 161. Residues 140 to 370 form the Radical SAM core domain; it reads TTGGYYSFLK…MEIQQGIAFE (231 aa). In terms of domain architecture, TRAM spans 373–440; the sequence is ESMVGRKLKV…KEYDLIGTAE (68 aa).

It belongs to the methylthiotransferase family. RimO subfamily. Requires [4Fe-4S] cluster as cofactor.

It is found in the cytoplasm. The enzyme catalyses L-aspartate(89)-[ribosomal protein uS12]-hydrogen + (sulfur carrier)-SH + AH2 + 2 S-adenosyl-L-methionine = 3-methylsulfanyl-L-aspartate(89)-[ribosomal protein uS12]-hydrogen + (sulfur carrier)-H + 5'-deoxyadenosine + L-methionine + A + S-adenosyl-L-homocysteine + 2 H(+). Functionally, catalyzes the methylthiolation of an aspartic acid residue of ribosomal protein uS12. This Lachnoclostridium phytofermentans (strain ATCC 700394 / DSM 18823 / ISDg) (Clostridium phytofermentans) protein is Ribosomal protein uS12 methylthiotransferase RimO.